The chain runs to 208 residues: UPF0637 protein BCB4264_A4063 (208 aa).

This sequence belongs to the UPF0637 family.

This Bacillus cereus (strain B4264) protein is UPF0637 protein BCB4264_A4063.